The sequence spans 156 residues: MSDRKPVRGRHQARKRAVALLFEAEVRGISAAEVVDTRAALAEAKPDIARLHPYTAAVARGVSEHAAHIDDLITAHLRGWTLDRLPAVDRAILRVSVWELLHAADVPEPVVVDEAVQLAKELSTDDSPGFVNGVLGQVMLVTPQLRAAAQAVRGGA.

This sequence belongs to the NusB family.

Involved in transcription antitermination. Required for transcription of ribosomal RNA (rRNA) genes. Binds specifically to the boxA antiterminator sequence of the ribosomal RNA (rrn) operons. This chain is Transcription antitermination protein NusB, found in Mycobacterium tuberculosis (strain CDC 1551 / Oshkosh).